Reading from the N-terminus, the 402-residue chain is GPI mannosyltransferase 1 (402 aa).

Transmembrane regions (helical) follow at residues 5-25, 79-99, 108-128, 162-182, 191-211, 238-258, 260-280, 309-329, 333-353, and 365-385; these read VILL…YGIF, WIHM…VMII, LTKQ…ITIS, LSIH…IYLL, IWRL…PTYF, FSIW…SQSI, LSKL…YLLW, QYFI…TITW, VVCI…AYLL, and LFFG…VFIT.

The protein belongs to the PIGM family.

Its subcellular location is the endoplasmic reticulum membrane. Its pathway is glycolipid biosynthesis; glycosylphosphatidylinositol-anchor biosynthesis. Mannosyltransferase involved in glycosylphosphatidylinositol-anchor biosynthesis. Transfers the first alpha-1,4-mannose to GlcN-acyl-PI during GPI precursor assembly. Required for cell wall integrity. The sequence is that of GPI mannosyltransferase 1 (GPI14) from Kluyveromyces lactis (strain ATCC 8585 / CBS 2359 / DSM 70799 / NBRC 1267 / NRRL Y-1140 / WM37) (Yeast).